We begin with the raw amino-acid sequence, 287 residues long: Cell division protein ZipA (287 aa).

Met1 is a topological domain (periplasmic). Residues 2 to 22 traverse the membrane as a helical segment; that stretch reads EIGLREWLIVIGIIVIAGILF. At 23 to 287 the chain is on the cytoplasmic side; the sequence is DGWRRMRGGK…FERRALTQKR (265 aa). Residues 70–143 form a disordered region; it reads LDEHDLPSMS…APRQSVNDQP (74 aa).

Belongs to the ZipA family. In terms of assembly, interacts with FtsZ via their C-terminal domains.

The protein resides in the cell inner membrane. In terms of biological role, essential cell division protein that stabilizes the FtsZ protofilaments by cross-linking them and that serves as a cytoplasmic membrane anchor for the Z ring. Also required for the recruitment to the septal ring of downstream cell division proteins. This is Cell division protein ZipA from Pseudomonas fluorescens (strain SBW25).